The chain runs to 149 residues: Small ribosomal subunit protein uS19w (149 aa).

This sequence belongs to the universal ribosomal protein uS19 family.

It localises to the cytoplasm. The polypeptide is Small ribosomal subunit protein uS19w (RPS15E) (Arabidopsis thaliana (Mouse-ear cress)).